The chain runs to 520 residues: Transactivator/viroplasmin protein (520 aa).

Disordered regions lie at residues 32 to 51 (GSSQ…KEEA) and 487 to 520 (QDAS…KQVD). Residues 40–51 (SLHRETPEKEEA) show a composition bias toward basic and acidic residues.

Belongs to the caulimoviridae viroplasmin family.

The protein resides in the host cytoplasm. Functionally, enhances the ribosomal termination-reinitiation event leading to the translation of major open reading frames on the polycistronic viral RNAs. The protein is Transactivator/viroplasmin protein of Arabidopsis thaliana (Mouse-ear cress).